Here is a 126-residue protein sequence, read N- to C-terminus: UPF0538 protein C2orf76 homolog (126 aa).

This sequence belongs to the UPF0538 family.

The polypeptide is UPF0538 protein C2orf76 homolog (Danio rerio (Zebrafish)).